The primary structure comprises 369 residues: Putative agmatine deiminase (369 aa).

Cys-355 serves as the catalytic Amidino-cysteine intermediate.

It belongs to the agmatine deiminase family.

It carries out the reaction agmatine + H2O = N-carbamoylputrescine + NH4(+). This chain is Putative agmatine deiminase, found in Marinomonas sp. (strain MWYL1).